Consider the following 48-residue polypeptide: Large ribosomal subunit protein bL33A (48 aa).

Belongs to the bacterial ribosomal protein bL33 family.

This is Large ribosomal subunit protein bL33A from Shouchella clausii (strain KSM-K16) (Alkalihalobacillus clausii).